The primary structure comprises 217 residues: Probable transaldolase (217 aa).

The Schiff-base intermediate with substrate role is filled by Lys-83.

Belongs to the transaldolase family. Type 3B subfamily.

The protein resides in the cytoplasm. It carries out the reaction D-sedoheptulose 7-phosphate + D-glyceraldehyde 3-phosphate = D-erythrose 4-phosphate + beta-D-fructose 6-phosphate. Its pathway is carbohydrate degradation; pentose phosphate pathway; D-glyceraldehyde 3-phosphate and beta-D-fructose 6-phosphate from D-ribose 5-phosphate and D-xylulose 5-phosphate (non-oxidative stage): step 2/3. Transaldolase is important for the balance of metabolites in the pentose-phosphate pathway. This Brucella abortus (strain S19) protein is Probable transaldolase.